Here is a 239-residue protein sequence, read N- to C-terminus: tRNA (guanine-N(7)-)-methyltransferase (239 aa).

S-adenosyl-L-methionine is bound by residues glutamate 69, glutamate 94, aspartate 121, and aspartate 144. Aspartate 144 is a catalytic residue. Lysine 148 contributes to the substrate binding site. Residues 150-155 (RHNKRR) are interaction with RNA. Substrate contacts are provided by residues aspartate 180 and 217-220 (TKFE).

Belongs to the class I-like SAM-binding methyltransferase superfamily. TrmB family. Monomer.

The catalysed reaction is guanosine(46) in tRNA + S-adenosyl-L-methionine = N(7)-methylguanosine(46) in tRNA + S-adenosyl-L-homocysteine. It functions in the pathway tRNA modification; N(7)-methylguanine-tRNA biosynthesis. In terms of biological role, catalyzes the formation of N(7)-methylguanine at position 46 (m7G46) in tRNA. This is tRNA (guanine-N(7)-)-methyltransferase from Shigella boydii serotype 4 (strain Sb227).